Reading from the N-terminus, the 397-residue chain is Acid extracellular protease (397 aa).

A signal peptide spans 1 to 17 (MQFSLATLTTLLAFVAA). The Peptidase A1 domain maps to 61–378 (YQVQISLGGQ…DLERDEVSIA (318 aa)). The active site involves D77. N88 is a glycosylation site (N-linked (GlcNAc...) asparagine). C93 and C100 are disulfide-bonded. D264 is a catalytic residue. A disulfide bridge connects residues C303 and C343. N-linked (GlcNAc...) asparagine glycosylation is found at N310 and N314.

The protein belongs to the peptidase A1 family.

The protein localises to the secreted. This chain is Acid extracellular protease (AXP1), found in Yarrowia lipolytica (strain CLIB 122 / E 150) (Yeast).